A 391-amino-acid polypeptide reads, in one-letter code: Mannose-6-phosphate isomerase (391 aa).

The Zn(2+) site is built by Gln-97, His-99, Glu-134, and His-255. The active site involves Arg-274. Lys-280 bears the N6-acetyllysine mark.

It belongs to the mannose-6-phosphate isomerase type 1 family. Zn(2+) serves as cofactor.

It is found in the cytoplasm. The catalysed reaction is D-mannose 6-phosphate = D-fructose 6-phosphate. In terms of biological role, involved in the conversion of glucose to GDP-L-fucose, which can be converted to L-fucose, a capsular polysaccharide. The protein is Mannose-6-phosphate isomerase (manA) of Shigella flexneri.